The primary structure comprises 431 residues: Keratin, type I cytoskeletal 40 (431 aa).

The head stretch occupies residues 1–89; it reads MTSDCSSTHC…CEDGVFTSNE (89 aa). One can recognise an IF rod domain in the interval 89–400; that stretch reads EKETMQFLND…GLLDSEDSRL (312 aa). The interval 90–124 is coil 1A; sequence KETMQFLNDRLASYLEKVRSLEETNAELESRIQEQ. Residues 125 to 135 form a linker 1 region; that stretch reads CEQDIPMVCPD. The tract at residues 136–236 is coil 1B; that stretch reads YQRYFNTIED…HEEEVNLLRE (101 aa). A linker 12 region spans residues 237–252; that stretch reads QLGDRLSVELDTAPTL. The segment at 253-396 is coil 2; sequence DLNRVLDEMR…NTYWGLLDSE (144 aa). The tract at residues 397 to 431 is tail; that stretch reads DSRLSCSPCSTTCTSSNTCEPCSAYVICTVENCCL.

It belongs to the intermediate filament family. As to quaternary structure, heterotetramer of two type I and two type II keratins. In terms of tissue distribution, expressed in skin and scalp. Also very weakly expressed in tongue, breast, colon and small intestine. In the hair follicle, it is specifically present in the upper hair cuticle. Not present in the upper cortex (at protein level).

May play a role in late hair differentiation. This Homo sapiens (Human) protein is Keratin, type I cytoskeletal 40 (KRT40).